Here is a 389-residue protein sequence, read N- to C-terminus: Inner membrane transport protein YdhP (389 aa).

The Cytoplasmic segment spans residues 1–6 (MKINYP). Residues 7–27 (LLALAIGAFGIGTTEFSPMGL) traverse the membrane as a helical segment. At 28–43 (LPVIARGVDVSIPAAG) the chain is on the periplasmic side. A helical transmembrane segment spans residues 44-64 (MLISAYAVGVMVGAPLMTLLL). The Cytoplasmic segment spans residues 65–70 (SHRARR). The helical transmembrane segment at 71–91 (SALIFLMAIFTLGNVLSAIAP) threads the bilayer. Over 92–100 (DYMTLMLSR) the chain is Periplasmic. A helical membrane pass occupies residues 101–121 (ILTSLNHGAFFGLGSVVAASV). At 122–130 (VPKHKQASA) the chain is on the cytoplasmic side. The chain crosses the membrane as a helical span at residues 131–151 (VATMFMGLTLANIGGVPAATW). At 152-159 (LGETIGWR) the chain is on the periplasmic side. Residues 160–180 (MSFLATAGLGVISMVSLFFSL) traverse the membrane as a helical segment. The Cytoplasmic portion of the chain corresponds to 181-203 (PKGGAGARPEVKKELAVLMRPQV). The chain crosses the membrane as a helical span at residues 204–224 (LSALLTTVLGAGAMFTLYTYI). Residues 225–236 (SPVLQSITHATP) lie on the Periplasmic side of the membrane. A helical membrane pass occupies residues 237-257 (VFVTAMLVLIGVGFSIGNYLG). The Cytoplasmic segment spans residues 258 to 266 (GKLADRSVN). Residues 267–287 (GTLKGFLLLLMVIMLAIPFLA) form a helical membrane-spanning segment. Over 288–290 (RNE) the chain is Periplasmic. The helical transmembrane segment at 291 to 311 (FGAAISMVVWGAATFAVVPPL) threads the bilayer. Over 312 to 330 (QMRVMRVASEAPGLSSSVN) the chain is Cytoplasmic. The chain crosses the membrane as a helical span at residues 331 to 351 (IGAFNLGNALGAAAGGAVISA). Over 352-356 (GLGYS) the chain is Periplasmic. A helical transmembrane segment spans residues 357 to 377 (FVPVMGAIVAGLALLLVFMSA). The Cytoplasmic segment spans residues 378-389 (RKQPETVCVANS).

This sequence belongs to the major facilitator superfamily.

The protein resides in the cell inner membrane. The chain is Inner membrane transport protein YdhP (ydhP) from Escherichia coli (strain K12).